We begin with the raw amino-acid sequence, 74 residues long: ATP synthase subunit 9, mitochondrial (74 aa).

2 helical membrane-spanning segments follow: residues isoleucine 8–phenylalanine 28 and isoleucine 50–isoleucine 70.

This sequence belongs to the ATPase C chain family. F-type ATPases have 2 components, CF(1) - the catalytic core - and CF(0) - the membrane proton channel. CF(1) has five subunits: alpha(3), beta(3), gamma(1), delta(1), epsilon(1). CF(0) has three main subunits: a, b and c.

It localises to the mitochondrion membrane. In terms of biological role, mitochondrial membrane ATP synthase (F(1)F(0) ATP synthase or Complex V) produces ATP from ADP in the presence of a proton gradient across the membrane which is generated by electron transport complexes of the respiratory chain. F-type ATPases consist of two structural domains, F(1) - containing the extramembraneous catalytic core and F(0) - containing the membrane proton channel, linked together by a central stalk and a peripheral stalk. During catalysis, ATP synthesis in the catalytic domain of F(1) is coupled via a rotary mechanism of the central stalk subunits to proton translocation. Part of the complex F(0) domain. A homomeric c-ring of probably 10 subunits is part of the complex rotary element. The sequence is that of ATP synthase subunit 9, mitochondrial (atp9) from Schizosaccharomyces pombe (strain 972 / ATCC 24843) (Fission yeast).